A 360-amino-acid chain; its full sequence is MLYLLSELSGTLTPLNVFRYITFRTGGALFTAGFFVFWFGPWIISLLRLRQGKGQPIREDGPASHLTKRGTPTMGGLMILAGAVVSILLWTNPHNHYVWVTLAVTLGFGAIGFYDDYLKVTKQSHKGFSGRFRLLLEFAIAGAACLMISLYSPAGLQNQLAFPVLKDTLLNLGWFWVPFAAFVIVGAGNAVNITDGLDGLAIVPVMIACATFGIIAYLVGNVIYAGYLQVNYVRDTGELAVVCGAVIGAGLGFLWFNAPPAQIFMGDTGSLALGGLLGSIAVAAKHEIVLAIVGGLFVLEIMSVIIQVVSFKLTGKRVFRMAPIHHHFEQKGWKEPQVVIRFWIIAVILALVGLATLKLR.

A run of 10 helical transmembrane segments spans residues 27 to 47 (GALF…ISLL), 70 to 90 (GTPT…ILLW), 98 to 118 (VWVT…DDYL), 134 to 154 (LLLE…YSPA), 168 to 188 (TLLN…VGAG), 199 to 219 (GLAI…AYLV), 239 to 259 (LAVV…FNAP), 263 to 283 (IFMG…IAVA), 288 to 308 (IVLA…IIQV), and 337 to 357 (QVVI…LATL).

This sequence belongs to the glycosyltransferase 4 family. MraY subfamily. Requires Mg(2+) as cofactor.

The protein localises to the cell inner membrane. The enzyme catalyses UDP-N-acetyl-alpha-D-muramoyl-L-alanyl-gamma-D-glutamyl-meso-2,6-diaminopimeloyl-D-alanyl-D-alanine + di-trans,octa-cis-undecaprenyl phosphate = di-trans,octa-cis-undecaprenyl diphospho-N-acetyl-alpha-D-muramoyl-L-alanyl-D-glutamyl-meso-2,6-diaminopimeloyl-D-alanyl-D-alanine + UMP. It functions in the pathway cell wall biogenesis; peptidoglycan biosynthesis. Functionally, catalyzes the initial step of the lipid cycle reactions in the biosynthesis of the cell wall peptidoglycan: transfers peptidoglycan precursor phospho-MurNAc-pentapeptide from UDP-MurNAc-pentapeptide onto the lipid carrier undecaprenyl phosphate, yielding undecaprenyl-pyrophosphoryl-MurNAc-pentapeptide, known as lipid I. This chain is Phospho-N-acetylmuramoyl-pentapeptide-transferase, found in Methylorubrum extorquens (strain CM4 / NCIMB 13688) (Methylobacterium extorquens).